A 1046-amino-acid polypeptide reads, in one-letter code: Hemoglobin-haptoglobin-binding protein A (1046 aa).

A signal peptide spans Met-1 to Ala-24. 4 consecutive repeat copies span residues Gln-26–Asn-29, Gln-30–Asn-33, Gln-34–Asn-37, and Gln-38–Asn-41. The 4 X 4 AA tandem repeats of Q-P-T-N stretch occupies residues Gln-26–Asn-41. A TonB box motif is present at residues Glu-51 to Ser-58. The region spanning His-61–Lys-188 is the TBDR plug domain. The TBDR beta-barrel domain maps to Asn-196 to Phe-1046. The TonB C-terminal box motif lies at Asn-1029 to Phe-1046.

This sequence belongs to the TonB-dependent receptor family. Hemoglobin/haptoglobin binding protein subfamily.

It is found in the cell outer membrane. Its function is as follows. Acts as a receptor for the hemoglobin/haptoglobin complex of the human host and is required for heme uptake. Does not bind hemoglobin alone. The polypeptide is Hemoglobin-haptoglobin-binding protein A (hhuA) (Haemophilus influenzae).